The following is a 549-amino-acid chain: DDB1- and CUL4-associated factor 11 (549 aa).

The span at 1 to 24 shows a compositional bias: low complexity; it reads MGSRNSSSAGSGSLEPSEGLSRRG. Residues 1–40 form a disordered region; it reads MGSRNSSSAGSGSLEPSEGLSRRGTGLRRSEEEEEEDEDV. Serine 73 and serine 75 each carry phosphoserine. WD repeat units lie at residues 170–210, 216–258, 263–302, 305–345, 353–392, 435–480, and 481–520; these read TYSQ…HKFK, DVGW…TALD, ERRF…RTLQ, SHED…EDDP, GHQD…SREG, GVLH…KKLT, and NHKA…YFQD.

Interacts with DDB1 and CUL4A.

The protein operates within protein modification; protein ubiquitination. Its function is as follows. May function as a substrate receptor for CUL4-DDB1 E3 ubiquitin-protein ligase complex. The polypeptide is DDB1- and CUL4-associated factor 11 (Dcaf11) (Mus musculus (Mouse)).